We begin with the raw amino-acid sequence, 167 residues long: Protein-export protein SecB (167 aa).

The disordered stretch occupies residues 1–20 (MASNDDAPVGAANGNGNTGA).

It belongs to the SecB family. Homotetramer, a dimer of dimers. One homotetramer interacts with 1 SecA dimer.

It is found in the cytoplasm. Functionally, one of the proteins required for the normal export of preproteins out of the cell cytoplasm. It is a molecular chaperone that binds to a subset of precursor proteins, maintaining them in a translocation-competent state. It also specifically binds to its receptor SecA. This is Protein-export protein SecB from Mesorhizobium japonicum (strain LMG 29417 / CECT 9101 / MAFF 303099) (Mesorhizobium loti (strain MAFF 303099)).